The primary structure comprises 192 residues: Glycerol-3-phosphate acyltransferase (192 aa).

A run of 5 helical transmembrane segments spans residues 4–24 (FAIIYMLFTYLLGSISSDVVI), 48–68 (LVLVVFLCDVLKGMLPVWVGY), 74–94 (YFELGMVALAACLGHIFPIFF), 101–121 (GVATAFGAIAPIAWGVAGSML), and 125–145 (LLIFLFSGYVALSTVVTALIL).

This sequence belongs to the PlsY family. In terms of assembly, probably interacts with PlsX.

The protein localises to the cell inner membrane. The catalysed reaction is an acyl phosphate + sn-glycerol 3-phosphate = a 1-acyl-sn-glycero-3-phosphate + phosphate. It participates in lipid metabolism; phospholipid metabolism. Catalyzes the transfer of an acyl group from acyl-phosphate (acyl-PO(4)) to glycerol-3-phosphate (G3P) to form lysophosphatidic acid (LPA). This enzyme utilizes acyl-phosphate as fatty acyl donor, but not acyl-CoA or acyl-ACP. This Histophilus somni (strain 129Pt) (Haemophilus somnus) protein is Glycerol-3-phosphate acyltransferase.